Consider the following 561-residue polypeptide: DNA ligase B (561 aa).

Lys-125 functions as the N6-AMP-lysine intermediate in the catalytic mechanism.

It belongs to the NAD-dependent DNA ligase family. LigB subfamily.

The catalysed reaction is NAD(+) + (deoxyribonucleotide)n-3'-hydroxyl + 5'-phospho-(deoxyribonucleotide)m = (deoxyribonucleotide)n+m + AMP + beta-nicotinamide D-nucleotide.. Functionally, catalyzes the formation of phosphodiester linkages between 5'-phosphoryl and 3'-hydroxyl groups in double-stranded DNA using NAD as a coenzyme and as the energy source for the reaction. This chain is DNA ligase B, found in Salmonella paratyphi B (strain ATCC BAA-1250 / SPB7).